Consider the following 572-residue polypeptide: Probable terpene synthase 13 (572 aa).

3 residues coordinate Mg(2+): D326, D330, and E478. A DDXXD motif motif is present at residues 326–330 (DDIFD).

Belongs to the terpene synthase family. The cofactor is Mg(2+).

Functionally, probable sesquiterpene synthase. The protein is Probable terpene synthase 13 (TPS13) of Ricinus communis (Castor bean).